A 274-amino-acid chain; its full sequence is Triosephosphate isomerase (274 aa).

31-33 is a binding site for substrate; sequence NWK. His118 serves as the catalytic Electrophile. The active-site Proton acceptor is the Glu188. Residues Gly194, Ser234, and 255–256 contribute to the substrate site; that span reads GG.

Belongs to the triosephosphate isomerase family. As to quaternary structure, homodimer.

The protein localises to the cytoplasm. It carries out the reaction D-glyceraldehyde 3-phosphate = dihydroxyacetone phosphate. It functions in the pathway carbohydrate biosynthesis; gluconeogenesis. Its pathway is carbohydrate degradation; glycolysis; D-glyceraldehyde 3-phosphate from glycerone phosphate: step 1/1. In terms of biological role, involved in the gluconeogenesis. Catalyzes stereospecifically the conversion of dihydroxyacetone phosphate (DHAP) to D-glyceraldehyde-3-phosphate (G3P). This is Triosephosphate isomerase from Chlamydia trachomatis serovar D (strain ATCC VR-885 / DSM 19411 / UW-3/Cx).